A 303-amino-acid polypeptide reads, in one-letter code: uncharacterized protein (303 aa).

This is an uncharacterized protein from Haemophilus influenzae (strain ATCC 51907 / DSM 11121 / KW20 / Rd).